Here is a 46-residue protein sequence, read N- to C-terminus: Photosystem II reaction center protein K (46 aa).

Residues 1–9 (MESILMIFA) constitute a propeptide that is removed on maturation. A helical membrane pass occupies residues 25–45 (LPVIPVLFLLLAFVWQAAVSF).

This sequence belongs to the PsbK family. As to quaternary structure, PSII is composed of 1 copy each of membrane proteins PsbA, PsbB, PsbC, PsbD, PsbE, PsbF, PsbH, PsbI, PsbJ, PsbK, PsbL, PsbM, PsbT, PsbX, PsbY, PsbZ, Psb30/Ycf12, at least 3 peripheral proteins of the oxygen-evolving complex and a large number of cofactors. It forms dimeric complexes.

Its subcellular location is the plastid. It localises to the chloroplast thylakoid membrane. One of the components of the core complex of photosystem II (PSII). PSII is a light-driven water:plastoquinone oxidoreductase that uses light energy to abstract electrons from H(2)O, generating O(2) and a proton gradient subsequently used for ATP formation. It consists of a core antenna complex that captures photons, and an electron transfer chain that converts photonic excitation into a charge separation. This is Photosystem II reaction center protein K from Stigeoclonium helveticum (Green alga).